Here is a 538-residue protein sequence, read N- to C-terminus: Nucleobase-ascorbate transporter 7 (538 aa).

Gly residues predominate over residues 1–11; that stretch reads MAGGGGGGGGV. The disordered stretch occupies residues 1–20; that stretch reads MAGGGGGGGGVAPPLKHDGL. A run of 12 helical transmembrane segments spans residues 45–65, 81–101, 103–123, 143–163, 166–186, 191–211, 229–249, 295–315, 372–394, 398–420, 432–452, and 471–491; these read AILL…LIPT, MVQT…FFGT, LPAV…IILA, IQGA…SGLW, VVRL…GFGL, FPLL…LLLF, FAVI…TVGG, FAMM…YIVV, VVQI…AIFA, APVV…LSLL, FILG…NQYT, and INVP…FLDV.

It belongs to the nucleobase:cation symporter-2 (NCS2) (TC 2.A.40) family. In terms of tissue distribution, expressed exclusively in ovules.

The protein resides in the cell membrane. This is Nucleobase-ascorbate transporter 7 (NAT7) from Arabidopsis thaliana (Mouse-ear cress).